A 1362-amino-acid polypeptide reads, in one-letter code: DNA-directed RNA polymerase subunit beta (1362 aa).

The protein belongs to the RNA polymerase beta chain family. As to quaternary structure, the RNAP catalytic core consists of 2 alpha, 1 beta, 1 beta' and 1 omega subunit. When a sigma factor is associated with the core the holoenzyme is formed, which can initiate transcription.

The catalysed reaction is RNA(n) + a ribonucleoside 5'-triphosphate = RNA(n+1) + diphosphate. DNA-dependent RNA polymerase catalyzes the transcription of DNA into RNA using the four ribonucleoside triphosphates as substrates. This chain is DNA-directed RNA polymerase subunit beta, found in Acidithiobacillus ferrooxidans (strain ATCC 23270 / DSM 14882 / CIP 104768 / NCIMB 8455) (Ferrobacillus ferrooxidans (strain ATCC 23270)).